The following is a 404-amino-acid chain: Argininosuccinate synthase (404 aa).

ATP contacts are provided by residues 11 to 19 (AYSGGLDTS) and A38. 2 residues coordinate L-citrulline: Y91 and S96. G121 is an ATP binding site. Positions 123, 127, and 128 each coordinate L-aspartate. N127 contributes to the L-citrulline binding site. The L-citrulline site is built by R131, S182, S191, E267, and Y279.

The protein belongs to the argininosuccinate synthase family. Type 1 subfamily. In terms of assembly, homotetramer.

The protein localises to the cytoplasm. It carries out the reaction L-citrulline + L-aspartate + ATP = 2-(N(omega)-L-arginino)succinate + AMP + diphosphate + H(+). Its pathway is amino-acid biosynthesis; L-arginine biosynthesis; L-arginine from L-ornithine and carbamoyl phosphate: step 2/3. The sequence is that of Argininosuccinate synthase from Paramagnetospirillum magneticum (strain ATCC 700264 / AMB-1) (Magnetospirillum magneticum).